Here is a 656-residue protein sequence, read N- to C-terminus: MIRSRSVLLIFRKVLYQSSCLKCLLCANSFSTSVSSSLGFRATNKELNQMIRSGYIAEARDIFEKLEARNTVTWNTMISGYVKRREMNQARKLFDVMPKRDVVTWNTMISGYVSCGGIRFLEEARKLFDEMPSRDSFSWNTMISGYAKNRRIGEALLLFEKMPERNAVSWSAMITGFCQNGEVDSAVVLFRKMPVKDSSPLCALVAGLIKNERLSEAAWVLGQYGSLVSGREDLVYAYNTLIVGYGQRGQVEAARCLFDQIPDLCGDDHGGEFRERFCKNVVSWNSMIKAYLKVGDVVSARLLFDQMKDRDTISWNTMIDGYVHVSRMEDAFALFSEMPNRDAHSWNMMVSGYASVGNVELARHYFEKTPEKHTVSWNSIIAAYEKNKDYKEAVDLFIRMNIEGEKPDPHTLTSLLSASTGLVNLRLGMQMHQIVVKTVIPDVPVHNALITMYSRCGEIMESRRIFDEMKLKREVITWNAMIGGYAFHGNASEALNLFGSMKSNGIYPSHITFVSVLNACAHAGLVDEAKAQFVSMMSVYKIEPQMEHYSSLVNVTSGQGQFEEAMYIITSMPFEPDKTVWGALLDACRIYNNVGLAHVAAEAMSRLEPESSTPYVLLYNMYADMGLWDEASQVRMNMESKRIKKERGSSWVDSST.

PPR repeat units follow at residues 70 to 104 (NTVT…DVVT), 105 to 134 (WNTM…MPSR), 135 to 169 (DSFS…NAVS), 170 to 200 (WSAM…DSSP), 203 to 227 (ALVA…YGSL), 234 to 264 (LVYA…IPDL), 280 to 310 (NVVS…MKDR), 311 to 345 (DTIS…DAHS), 346 to 372 (WNMM…TPEK), 373 to 407 (HTVS…GEKP), 408 to 438 (DPHT…VVKT), 442 to 472 (DVPV…MKLK), 474 to 508 (EVIT…GIYP), 509 to 544 (SHIT…KIEP), and 545 to 575 (QMEH…MPFE). The interval 580 to 655 (VWGALLDACR…ERGSSWVDSS (76 aa)) is type E motif.

This sequence belongs to the PPR family. PCMP-E subfamily.

The protein localises to the mitochondrion. The sequence is that of Pentatricopeptide repeat-containing protein At1g62260, mitochondrial (PCMP-E10) from Arabidopsis thaliana (Mouse-ear cress).